The sequence spans 618 residues: DNA mismatch repair protein MutL (618 aa).

Positions 366–381 (AEPTAAREPATPRYSG) are enriched in low complexity. The interval 366 to 403 (AEPTAAREPATPRYSGGASGGNGGRQSAGGWPHAQPGY) is disordered. Over residues 382–392 (GASGGNGGRQS) the composition is skewed to gly residues.

Belongs to the DNA mismatch repair MutL/HexB family.

Its function is as follows. This protein is involved in the repair of mismatches in DNA. It is required for dam-dependent methyl-directed DNA mismatch repair. May act as a 'molecular matchmaker', a protein that promotes the formation of a stable complex between two or more DNA-binding proteins in an ATP-dependent manner without itself being part of a final effector complex. This Salmonella schwarzengrund (strain CVM19633) protein is DNA mismatch repair protein MutL.